The primary structure comprises 328 residues: Delta-aminolevulinic acid dehydratase (328 aa).

K200 functions as the Schiff-base intermediate with substrate in the catalytic mechanism. Positions 210 and 222 each coordinate 5-aminolevulinate. E238 provides a ligand contact to Mg(2+). K253 serves as the catalytic Schiff-base intermediate with substrate. Positions 279 and 318 each coordinate 5-aminolevulinate.

Belongs to the ALAD family. As to quaternary structure, homooctamer.

The enzyme catalyses 2 5-aminolevulinate = porphobilinogen + 2 H2O + H(+). It functions in the pathway porphyrin-containing compound metabolism; protoporphyrin-IX biosynthesis; coproporphyrinogen-III from 5-aminolevulinate: step 1/4. With respect to regulation, stimulated by magnesium, inhibited by zinc. Functionally, catalyzes an early step in the biosynthesis of tetrapyrroles. Binds two molecules of 5-aminolevulinate per subunit, each at a distinct site, and catalyzes their condensation to form porphobilinogen. The polypeptide is Delta-aminolevulinic acid dehydratase (hemB) (Chlorobaculum tepidum (strain ATCC 49652 / DSM 12025 / NBRC 103806 / TLS) (Chlorobium tepidum)).